The following is a 155-amino-acid chain: 6,7-dimethyl-8-ribityllumazine synthase (155 aa).

5-amino-6-(D-ribitylamino)uracil-binding positions include F23, 57–59 (AFE), and 81–83 (AVI). 86-87 (ST) is a (2S)-2-hydroxy-3-oxobutyl phosphate binding site. H89 (proton donor) is an active-site residue. A 5-amino-6-(D-ribitylamino)uracil-binding site is contributed by F114. A (2S)-2-hydroxy-3-oxobutyl phosphate-binding site is contributed by R128.

Belongs to the DMRL synthase family.

The catalysed reaction is (2S)-2-hydroxy-3-oxobutyl phosphate + 5-amino-6-(D-ribitylamino)uracil = 6,7-dimethyl-8-(1-D-ribityl)lumazine + phosphate + 2 H2O + H(+). The protein operates within cofactor biosynthesis; riboflavin biosynthesis; riboflavin from 2-hydroxy-3-oxobutyl phosphate and 5-amino-6-(D-ribitylamino)uracil: step 1/2. In terms of biological role, catalyzes the formation of 6,7-dimethyl-8-ribityllumazine by condensation of 5-amino-6-(D-ribitylamino)uracil with 3,4-dihydroxy-2-butanone 4-phosphate. This is the penultimate step in the biosynthesis of riboflavin. This chain is 6,7-dimethyl-8-ribityllumazine synthase, found in Dehalococcoides mccartyi (strain ATCC BAA-2100 / JCM 16839 / KCTC 5957 / BAV1).